A 227-amino-acid chain; its full sequence is MSKSRSLVRLLQLASPMLPVGAYSYSQGLEWGIESGEVHDLESAQAWIGDVLQVYQGGFELPVLSRCYRAWQRGDVEALNEWNAFYLAGRDNAEALAESRQMGYSLKRLLLEFEELSGAWATMLEALPNASFPALYAGISQAWEIEEQDALQAYAWSWLENQASAAMKAVPLGQVAGQKILLGVAGKIPVLVEAAIQMQDHEISNFCPALTIAGCRHETQYSRLFRS.

This sequence belongs to the UreF family. UreD, UreF and UreG form a complex that acts as a GTP-hydrolysis-dependent molecular chaperone, activating the urease apoprotein by helping to assemble the nickel containing metallocenter of UreC. The UreE protein probably delivers the nickel.

The protein localises to the cytoplasm. Required for maturation of urease via the functional incorporation of the urease nickel metallocenter. This Methylobacillus flagellatus (strain ATCC 51484 / DSM 6875 / VKM B-1610 / KT) protein is Urease accessory protein UreF.